We begin with the raw amino-acid sequence, 866 residues long: DNA mismatch repair protein MutS (866 aa).

613–620 (GPNMGGKS) contributes to the ATP binding site.

This sequence belongs to the DNA mismatch repair MutS family.

This protein is involved in the repair of mismatches in DNA. It is possible that it carries out the mismatch recognition step. This protein has a weak ATPase activity. The sequence is that of DNA mismatch repair protein MutS from Haemophilus ducreyi (strain 35000HP / ATCC 700724).